Consider the following 186-residue polypeptide: Shikimate kinase (186 aa).

Gly15 to Thr20 is a binding site for ATP. Thr19 serves as a coordination point for Mg(2+). Positions 37, 61, and 83 each coordinate substrate. Residue Arg121 coordinates ATP. Residue Arg140 coordinates substrate.

This sequence belongs to the shikimate kinase family. In terms of assembly, monomer. Requires Mg(2+) as cofactor.

It localises to the cytoplasm. It catalyses the reaction shikimate + ATP = 3-phosphoshikimate + ADP + H(+). Its pathway is metabolic intermediate biosynthesis; chorismate biosynthesis; chorismate from D-erythrose 4-phosphate and phosphoenolpyruvate: step 5/7. Its function is as follows. Catalyzes the specific phosphorylation of the 3-hydroxyl group of shikimic acid using ATP as a cosubstrate. The protein is Shikimate kinase of Psychrobacter cryohalolentis (strain ATCC BAA-1226 / DSM 17306 / VKM B-2378 / K5).